Consider the following 211-residue polypeptide: UPF0502 protein PC1_1804 (211 aa).

A disordered region spans residues 168–188 (SGDASDAAPEEEGAGDNSHQL).

The protein belongs to the UPF0502 family.

This chain is UPF0502 protein PC1_1804, found in Pectobacterium carotovorum subsp. carotovorum (strain PC1).